A 243-amino-acid chain; its full sequence is Phomoidride biosynthesis cluster protein B (243 aa).

It belongs to the tstB family.

Phosphatidylethanolamine-binding protein; part of the gene cluster that mediates the biosynthesis of the antihypercholesterolemic agents phomoidrides which are dimeric anhydrides. Within the pathway, tstB is not essential for dimerization and its function has still to be determined. The pathway begins with the highly reducing polyketide synthase tstA that catalyzes the formation of a C12-fatty acyl-ACP, starting from one acetate and 5 malonate units. The hydrolase tstM is involved in the release of the C12-fatty acyl chain from phiA. The alkylcitrate synthase (ACS) tstJ and the alkylcitrate dehydratase (ACDH) tstI then give rise to decarboxylated monomeric anhydrides by coupling the C12-fatty acyl chain with oxalacetic acid. The cyclase tstC is responsible for the dimerization of the monomeric anhydrides which leads to the production of prephomoidride that contains the characteristic bicyclo[4.3.1]deca-1,6-diene system of phomoidrides. Iterative oxidation catalyzed by the alpha-ketoglutarate-dependent dioxygenase tstK produced then phomoidride A. Finally, the methyltransferase tstE converts phomoidride A to phomoidride B via an acetalization reaction. The phosphatidylethanolamine-binding protein tstB and tstN are not essential for dimerization and their functions have still to be determined. The sequence is that of Phomoidride biosynthesis cluster protein B from Talaromyces stipitatus (strain ATCC 10500 / CBS 375.48 / QM 6759 / NRRL 1006) (Penicillium stipitatum).